We begin with the raw amino-acid sequence, 1340 residues long: DNA-directed RNA polymerase subunit beta (1340 aa).

It belongs to the RNA polymerase beta chain family. The RNAP catalytic core consists of 2 alpha, 1 beta, 1 beta' and 1 omega subunit. When a sigma factor is associated with the core the holoenzyme is formed, which can initiate transcription.

The catalysed reaction is RNA(n) + a ribonucleoside 5'-triphosphate = RNA(n+1) + diphosphate. DNA-dependent RNA polymerase catalyzes the transcription of DNA into RNA using the four ribonucleoside triphosphates as substrates. This is DNA-directed RNA polymerase subunit beta from Baumannia cicadellinicola subsp. Homalodisca coagulata.